Consider the following 516-residue polypeptide: Squalene epoxidase 4 (516 aa).

Transmembrane regions (helical) follow at residues 2–22 and 43–63; these read TYAW…FHLI and ATDV…YALA. FAD contacts are provided by residues 53–54, 73–74, Arg81, Arg153, Val169, Asp335, and Met348; these read VA and ER. Residues 435–455 traverse the membrane as a helical segment; that stretch reads ILGGMNPHPLTLVLHLVAITL.

The protein belongs to the squalene monooxygenase family. FAD is required as a cofactor. Expressed mainly in seedlings and inflorescences.

The protein resides in the membrane. It catalyses the reaction squalene + reduced [NADPH--hemoprotein reductase] + O2 = (S)-2,3-epoxysqualene + oxidized [NADPH--hemoprotein reductase] + H2O + H(+). It participates in terpene metabolism; lanosterol biosynthesis; lanosterol from farnesyl diphosphate: step 2/3. Functionally, catalyzes the stereospecific oxidation of squalene to (S)-2,3-epoxysqualene, and is considered to be a rate-limiting enzyme in steroid biosynthesis. This is Squalene epoxidase 4 (SQE4) from Arabidopsis thaliana (Mouse-ear cress).